A 1904-amino-acid chain; its full sequence is Fatty acid synthase beta subunit hexB (1904 aa).

Residues 24–395 (LSVAFGGQGP…TEGTGVRVIQ (372 aa)) form an acetyltransferase (AT) domain region. The segment at 447–691 (TQLLNAPPVM…LIVQTEGVGD (245 aa)) is enoyl reductase (ER) domain. The interval 1001–1491 (GPAADCWTHH…RPNDRLKIQL (491 aa)) is dehydratase (DH) domain. The MaoC-like domain occupies 1399-1512 (PGWNEGSTVL…MKVQAFNDET (114 aa)). A malonyl/palmitoyl transferase (MT/PT) domain region spans residues 1530 to 1893 (YVFCGQGSQE…IEHVQSVTGS (364 aa)).

This sequence belongs to the fungal fatty acid synthetase subunit beta family. As to quaternary structure, [Alpha(6)beta(6)] hexamers of two multifunctional subunits (alpha and beta).

It catalyses the reaction acetyl-CoA + n malonyl-CoA + 2n NADPH + 4n H(+) = a long-chain-acyl-CoA + n CoA + n CO2 + 2n NADP(+).. The enzyme catalyses holo-[ACP] + acetyl-CoA = acetyl-[ACP] + CoA. The catalysed reaction is holo-[ACP] + malonyl-CoA = malonyl-[ACP] + CoA. It carries out the reaction a (3R)-hydroxyacyl-[ACP] = a (2E)-enoyl-[ACP] + H2O. It catalyses the reaction a 2,3-saturated acyl-[ACP] + NAD(+) = a (2E)-enoyl-[ACP] + NADH + H(+). The enzyme catalyses (9Z)-octadecenoyl-[ACP] + H2O = (9Z)-octadecenoate + holo-[ACP] + H(+). The protein operates within mycotoxin biosynthesis. Functionally, fatty acid synthase beta subunit; part of the fragmented gene cluster that mediates the biosynthesis of dothistromin (DOTH), a polyketide toxin very similar in structure to the aflatoxin precursor, versicolorin B. The first step of the pathway is the conversion of acetate to norsolorinic acid (NOR) and requires the fatty acid synthase subunits hexA and hexB, as well as the polyketide synthase pksA. PksA combines a hexanoyl starter unit and 7 malonyl-CoA extender units to synthesize the precursor NOR. The hexanoyl starter unit is provided to the acyl-carrier protein (ACP) domain by the fungal fatty acid synthase hexA/hexB. The second step is the conversion of NOR to averantin (AVN) and requires the norsolorinic acid ketoreductase nor1, which catalyzes the dehydration of norsolorinic acid to form (1'S)-averantin. The cytochrome P450 monooxygenase avnA then catalyzes the hydroxylation of AVN to 5'hydroxyaverantin (HAVN). The next step is performed by adhA that transforms HAVN to averufin (AVF). Averufin might then be converted to hydroxyversicolorone by cypX and avfA. Hydroxyversicolorone is further converted versiconal hemiacetal acetate (VHA) by moxY. VHA is then the substrate for the versiconal hemiacetal acetate esterase est1 to yield versiconal (VAL). Versicolorin B synthase vbsA then converts VAL to versicolorin B (VERB) by closing the bisfuran ring. Then, the activity of the versicolorin B desaturase verB leads to versicolorin A (VERA). DotB, a predicted chloroperoxidase, may perform epoxidation of the A-ring of VERA. Alternatively, a cytochrome P450, such as cypX or avnA could catalyze this step. It is also possible that another, uncharacterized, cytochrome P450 enzyme is responsible for this step. Opening of the epoxide could potentially be achieved by the epoxide hydrolase epoA. However, epoA seems not to be required for DOTH biosynthesis, but other epoxide hydrolases may have the ability to complement this hydrolysis. Alternatively, opening of the epoxide ring could be achieved non-enzymatically. The next step is the deoxygenation of ring A to yield the 5,8-dihydroxyanthraquinone which is most likely catalyzed by the NADPH dehydrogenase encoded by ver1. The last stages of DOTH biosynthesis are proposed to involve hydroxylation of the bisfuran. OrdB and norB might have oxidative roles here. An alternative possibility is that cytochrome P450 monoogenases such as avnA and cypX might perform these steps in addition to previously proposed steps. This is Fatty acid synthase beta subunit hexB from Dothistroma septosporum (strain NZE10 / CBS 128990) (Red band needle blight fungus).